Here is a 133-residue protein sequence, read N- to C-terminus: Ribosome-binding factor A (133 aa).

This sequence belongs to the RbfA family. In terms of assembly, monomer. Binds 30S ribosomal subunits, but not 50S ribosomal subunits or 70S ribosomes.

It is found in the cytoplasm. Its function is as follows. One of several proteins that assist in the late maturation steps of the functional core of the 30S ribosomal subunit. Associates with free 30S ribosomal subunits (but not with 30S subunits that are part of 70S ribosomes or polysomes). Required for efficient processing of 16S rRNA. May interact with the 5'-terminal helix region of 16S rRNA. This chain is Ribosome-binding factor A, found in Bordetella parapertussis (strain 12822 / ATCC BAA-587 / NCTC 13253).